A 65-amino-acid polypeptide reads, in one-letter code: Large ribosomal subunit protein bL35 (65 aa).

It belongs to the bacterial ribosomal protein bL35 family.

This is Large ribosomal subunit protein bL35 from Thermus thermophilus (strain ATCC BAA-163 / DSM 7039 / HB27).